A 266-amino-acid chain; its full sequence is Type III pantothenate kinase (266 aa).

D6–K13 provides a ligand contact to ATP. Residues Y94 and G101–R104 contribute to the substrate site. Residue D103 is the Proton acceptor of the active site. D128 is a K(+) binding site. ATP is bound at residue T131. A substrate-binding site is contributed by T183.

The protein belongs to the type III pantothenate kinase family. Homodimer. NH4(+) serves as cofactor. It depends on K(+) as a cofactor.

It is found in the cytoplasm. The enzyme catalyses (R)-pantothenate + ATP = (R)-4'-phosphopantothenate + ADP + H(+). It functions in the pathway cofactor biosynthesis; coenzyme A biosynthesis; CoA from (R)-pantothenate: step 1/5. Its function is as follows. Catalyzes the phosphorylation of pantothenate (Pan), the first step in CoA biosynthesis. The sequence is that of Type III pantothenate kinase from Nitrosococcus oceani (strain ATCC 19707 / BCRC 17464 / JCM 30415 / NCIMB 11848 / C-107).